Reading from the N-terminus, the 105-residue chain is Antitoxin HigA-1 (105 aa).

The region spanning 15 to 69 is the HTH cro/C1-type domain; the sequence is LKVEFLEPMGITSKALAEAMGVHRNTVSNLINGGVLTAPVAIKLAAALGNTPEFW. Positions 27 to 46 form a DNA-binding region, H-T-H motif; the sequence is SKALAEAMGVHRNTVSNLIN.

Functionally, antitoxin component of a type II toxin-antitoxin (TA) system that counteracts the effect of the HigB-1 toxin. Binds to its own promoter and regulates transcription of the higB-1/higA-1 operon. This is Antitoxin HigA-1 (higA-1) from Vibrio cholerae serotype O1 (strain ATCC 39315 / El Tor Inaba N16961).